We begin with the raw amino-acid sequence, 389 residues long: Succinate--CoA ligase [ADP-forming] subunit beta (389 aa).

Residues 9–244 (KELLRQFNVP…IDEEDAAEIE (236 aa)) enclose the ATP-grasp domain. ATP is bound by residues K46, 53-55 (GRG), E99, A102, and E107. 2 residues coordinate Mg(2+): N199 and D213. Substrate-binding positions include N264 and 321–323 (GIM).

Belongs to the succinate/malate CoA ligase beta subunit family. Heterotetramer of two alpha and two beta subunits. Mg(2+) is required as a cofactor.

The enzyme catalyses succinate + ATP + CoA = succinyl-CoA + ADP + phosphate. It carries out the reaction GTP + succinate + CoA = succinyl-CoA + GDP + phosphate. The protein operates within carbohydrate metabolism; tricarboxylic acid cycle; succinate from succinyl-CoA (ligase route): step 1/1. Functionally, succinyl-CoA synthetase functions in the citric acid cycle (TCA), coupling the hydrolysis of succinyl-CoA to the synthesis of either ATP or GTP and thus represents the only step of substrate-level phosphorylation in the TCA. The beta subunit provides nucleotide specificity of the enzyme and binds the substrate succinate, while the binding sites for coenzyme A and phosphate are found in the alpha subunit. In Polynucleobacter necessarius subsp. necessarius (strain STIR1), this protein is Succinate--CoA ligase [ADP-forming] subunit beta.